The sequence spans 347 residues: DNA-directed RNA polymerase subunit alpha (347 aa).

Residues 1 to 226 (MLISQRPTLS…ELFGLARELN (226 aa)) form an alpha N-terminal domain (alpha-NTD) region. Positions 243 to 347 (HIASFALPID…EQDYAETEQL (105 aa)) are alpha C-terminal domain (alpha-CTD).

This sequence belongs to the RNA polymerase alpha chain family. In terms of assembly, homodimer. The RNAP catalytic core consists of 2 alpha, 1 beta, 1 beta' and 1 omega subunit. When a sigma factor is associated with the core the holoenzyme is formed, which can initiate transcription.

It carries out the reaction RNA(n) + a ribonucleoside 5'-triphosphate = RNA(n+1) + diphosphate. DNA-dependent RNA polymerase catalyzes the transcription of DNA into RNA using the four ribonucleoside triphosphates as substrates. The polypeptide is DNA-directed RNA polymerase subunit alpha (Mycobacterium bovis (strain ATCC BAA-935 / AF2122/97)).